A 100-amino-acid chain; its full sequence is Integration host factor subunit alpha (100 aa).

Belongs to the bacterial histone-like protein family. Heterodimer of an alpha and a beta chain.

Functionally, this protein is one of the two subunits of integration host factor, a specific DNA-binding protein that functions in genetic recombination as well as in transcriptional and translational control. Involved in hydrogenase gene expression. This is Integration host factor subunit alpha (ihfA) from Rhodobacter capsulatus (Rhodopseudomonas capsulata).